A 352-amino-acid polypeptide reads, in one-letter code: Protein Wnt-11 (352 aa).

Positions 1-22 (MKIYFLLGTFLTFLLHTRICQG) are cleaved as a signal peptide. N-linked (GlcNAc...) asparagine glycans are attached at residues N38 and N88. Intrachain disulfides connect C78–C89, C128–C136, C138–C155, C207–C221, and C209–C216. Residue S213 is the site of O-palmitoleoyl serine; by PORCN attachment. Residues Y273 and Y280 each carry the sulfotyrosine modification. 6 disulfides stabilise this stretch: C281-C312, C297-C307, C311-C351, C327-C342, C329-C339, and C334-C335. N-linked (GlcNAc...) asparagine glycosylation occurs at N298.

It belongs to the Wnt family. Glycosylation is required for protein secretion. Post-translationally, palmitoleoylation is required for efficient binding to frizzled receptors. Depalmitoleoylation leads to Wnt signaling pathway inhibition. In embryos, expressed in the neural tube, dorsal somite, mesenchymal cells within the dorsal fin, branchial arches and heart muscle, becoming expressed throughout the myocardium by the tadpole stage (stage 45). Prior to neural crest cell migration, expressed in a domain flanking the neural crest on the medial or neural (the opposite side to wnt11b). Weakly expressed in the developing pronephros from stage 25, with expression increasing from stages 30 to 35.

It localises to the secreted. It is found in the extracellular space. The protein resides in the extracellular matrix. Functionally, ligand for members of the frizzled family of seven transmembrane receptors. Shares much functionality with wnt11b. Signals through a non-canonical Wnt pathway to activate Jun-N-terminal kinase (JNK) to regulate gastrulation movements. Acts in a non-cell-autonomous manner to control neural crest migration, probably acting as an extracellular signal from surrounding tissue, but is not required for neural crest induction. Acts redundantly with wnt11b during pronephros induction. Regulates cardiac morphogenesis through the activation of JNK, but is not required for cardiac differentiation. Essential for dorsal fin development; required for an epithelial to mesenchymal transformation event prior to migration of cells into the fin, and ultimately for maintenance of fin structure. Mediates dorsal fin development through a non-canonical pathway mediated by Ca(2+). The polypeptide is Protein Wnt-11 (Xenopus laevis (African clawed frog)).